We begin with the raw amino-acid sequence, 742 residues long: 5-methyltetrahydropteroyltriglutamate--homocysteine methyltransferase (742 aa).

5-methyltetrahydropteroyltri-L-glutamate contacts are provided by residues 18–21 and Lys-112; that span reads REWK. L-homocysteine contacts are provided by residues 420 to 422 and Glu-473; that span reads IGS. L-methionine is bound by residues 420–422 and Glu-473; that span reads IGS. A 5-methyltetrahydropteroyltri-L-glutamate-binding site is contributed by Trp-550. Asp-588 contacts L-homocysteine. Asp-588 is a binding site for L-methionine. Residue Glu-594 participates in 5-methyltetrahydropteroyltri-L-glutamate binding. Residues His-630, Cys-632, and Glu-654 each contribute to the Zn(2+) site. His-683 (proton donor) is an active-site residue. Cys-715 is a binding site for Zn(2+).

Belongs to the vitamin-B12 independent methionine synthase family. It depends on Zn(2+) as a cofactor.

It carries out the reaction 5-methyltetrahydropteroyltri-L-glutamate + L-homocysteine = tetrahydropteroyltri-L-glutamate + L-methionine. It participates in amino-acid biosynthesis; L-methionine biosynthesis via de novo pathway; L-methionine from L-homocysteine (MetE route): step 1/1. Catalyzes the transfer of a methyl group from 5-methyltetrahydrofolate to homocysteine resulting in methionine formation. This is 5-methyltetrahydropteroyltriglutamate--homocysteine methyltransferase from Staphylococcus aureus (strain JH9).